Consider the following 182-residue polypeptide: Large ribosomal subunit protein uL5 (182 aa).

This sequence belongs to the universal ribosomal protein uL5 family. In terms of assembly, part of the 50S ribosomal subunit; part of the 5S rRNA/L5/L18/L25 subcomplex. Contacts the 5S rRNA and the P site tRNA. Forms a bridge to the 30S subunit in the 70S ribosome.

Its function is as follows. This is one of the proteins that bind and probably mediate the attachment of the 5S RNA into the large ribosomal subunit, where it forms part of the central protuberance. In the 70S ribosome it contacts protein S13 of the 30S subunit (bridge B1b), connecting the 2 subunits; this bridge is implicated in subunit movement. Contacts the P site tRNA; the 5S rRNA and some of its associated proteins might help stabilize positioning of ribosome-bound tRNAs. This Thermosipho melanesiensis (strain DSM 12029 / CIP 104789 / BI429) protein is Large ribosomal subunit protein uL5.